The chain runs to 393 residues: GDP-mannose:cellobiosyl-diphosphopolyprenol alpha-mannosyltransferase (393 aa).

This sequence belongs to the glycosyltransferase group 1 family. Glycosyltransferase 4 subfamily.

It carries out the reaction beta-D-Glc-(1-&gt;4)-alpha-D-Glc-di-trans,octa-cis-undecaprenyl diphosphate + GDP-alpha-D-mannose = alpha-D-Man-(1-&gt;3)-beta-D-Glc-(1-&gt;4)-alpha-D-Glc-1-di-trans,octa-cis-undecaprenyl diphosphate + GDP + H(+). Functionally, involved in the biosynthesis of the exopolysaccharide acetan, a water-soluble polysaccharide involved in production of bacterial cellulose (BC). The chain is GDP-mannose:cellobiosyl-diphosphopolyprenol alpha-mannosyltransferase (aceC) from Komagataeibacter xylinus (Gluconacetobacter xylinus).